The sequence spans 309 residues: Methionyl-tRNA formyltransferase (309 aa).

107–110 is a binding site for (6S)-5,6,7,8-tetrahydrofolate; it reads SLLP.

The protein belongs to the Fmt family.

It carries out the reaction L-methionyl-tRNA(fMet) + (6R)-10-formyltetrahydrofolate = N-formyl-L-methionyl-tRNA(fMet) + (6S)-5,6,7,8-tetrahydrofolate + H(+). Its function is as follows. Attaches a formyl group to the free amino group of methionyl-tRNA(fMet). The formyl group appears to play a dual role in the initiator identity of N-formylmethionyl-tRNA by promoting its recognition by IF2 and preventing the misappropriation of this tRNA by the elongation apparatus. The chain is Methionyl-tRNA formyltransferase from Borrelia turicatae (strain 91E135).